A 174-amino-acid polypeptide reads, in one-letter code: Small ribosomal subunit protein uS5 (174 aa).

Positions 16 to 79 constitute an S5 DRBM domain; the sequence is LSELLVSVRR…NAAKKSMIRV (64 aa).

It belongs to the universal ribosomal protein uS5 family. As to quaternary structure, part of the 30S ribosomal subunit. Contacts proteins S4 and S8.

In terms of biological role, with S4 and S12 plays an important role in translational accuracy. Its function is as follows. Located at the back of the 30S subunit body where it stabilizes the conformation of the head with respect to the body. The polypeptide is Small ribosomal subunit protein uS5 (Anaplasma marginale (strain Florida)).